The chain runs to 133 residues: Sporulation-specific protein 2 (133 aa).

The protein belongs to the VPS13 family. Interacts with spo13 and spo15.

Its subcellular location is the cytoplasm. It is found in the cytoskeleton. It localises to the microtubule organizing center. The protein resides in the spindle pole body. Its function is as follows. Involved in sporulation. Plays a significant role in modification of the spindle pole body prior to spore formation and is required for initiating forespore membrane formation. Assists in the localization of spo13 to the outer surface of the SPB. This is Sporulation-specific protein 2 (spo2) from Schizosaccharomyces pombe (strain 972 / ATCC 24843) (Fission yeast).